The sequence spans 348 residues: Organic solute transporter alpha-like protein 3 (348 aa).

Residues 1-49 (MAKEHGAMRSVLNLIGSVMLPQDTSNCSDRHDTPSAPEFLSHLQPFQTV) lie on the Extracellular side of the membrane. An N-linked (GlcNAc...) asparagine glycan is attached at Asn26. A helical membrane pass occupies residues 50 to 70 (LLSIASFSTTIVLCLSLIHWF). At 71-84 (YVYKYVSIEKRRNK) the chain is on the cytoplasmic side. A helical membrane pass occupies residues 85–105 (LYWLIAVFPVACSCSFIAMCV). At 106–109 (PRTA) the chain is on the extracellular side. The helical transmembrane segment at 110–130 (VILTCIGVLYYLMCLFVIVSL) threads the bilayer. Topologically, residues 131–180 (ARHLFGGRESFSTCLQYDDRPIDFRSPPFCCIIPKLPTARSTEKNIRRLE) are cytoplasmic. A helical membrane pass occupies residues 181–201 (WCVLQAPIVRSIIIFLDVVAV). The Extracellular segment spans residues 202-213 (AEMREDATPYIR). The helical transmembrane segment at 214–234 (YSDMASLCSLLLAIFGVHTLA) threads the bilayer. The Cytoplasmic portion of the chain corresponds to 235 to 240 (RVTSNK). A helical membrane pass occupies residues 241–261 (LSAYCFMSMFRLVDISLLFFS). Residues 262 to 291 (AQQPMIFQNVLLRFNLISCGPLLNAQENAY) lie on the Extracellular side of the membrane. A helical membrane pass occupies residues 292-312 (FVCNFIITCEMLLLSVLATWL). The Cytoplasmic portion of the chain corresponds to 313 to 348 (LAPRHNAMFDAYRPSMALSETTASLNETEQSMILDH).

It belongs to the OST-alpha family.

It localises to the cell membrane. In terms of biological role, probable transporter. The sequence is that of Organic solute transporter alpha-like protein 3 (osta-3) from Caenorhabditis elegans.